The chain runs to 298 residues: ATP phosphoribosyltransferase (298 aa).

It belongs to the ATP phosphoribosyltransferase family. Long subfamily. Requires Mg(2+) as cofactor.

The protein resides in the cytoplasm. The enzyme catalyses 1-(5-phospho-beta-D-ribosyl)-ATP + diphosphate = 5-phospho-alpha-D-ribose 1-diphosphate + ATP. Its pathway is amino-acid biosynthesis; L-histidine biosynthesis; L-histidine from 5-phospho-alpha-D-ribose 1-diphosphate: step 1/9. Feedback inhibited by histidine. Its function is as follows. Catalyzes the condensation of ATP and 5-phosphoribose 1-diphosphate to form N'-(5'-phosphoribosyl)-ATP (PR-ATP). Has a crucial role in the pathway because the rate of histidine biosynthesis seems to be controlled primarily by regulation of HisG enzymatic activity. In Aeromonas hydrophila subsp. hydrophila (strain ATCC 7966 / DSM 30187 / BCRC 13018 / CCUG 14551 / JCM 1027 / KCTC 2358 / NCIMB 9240 / NCTC 8049), this protein is ATP phosphoribosyltransferase.